Consider the following 126-residue polypeptide: Histone H2B 8 (126 aa).

Over residues 1 to 12 the composition is skewed to low complexity; that stretch reads MPEPAKSAPAPK. A disordered region spans residues 1 to 35; that stretch reads MPEPAKSAPAPKKGSKKAVTKTQKKGDKKRRKTRK. N6-acetyllysine is present on residues Lys-6 and Lys-13. Residues 13–34 are compositionally biased toward basic residues; the sequence is KGSKKAVTKTQKKGDKKRRKTR. Ser-15 carries the phosphoserine modification. An N6-acetyllysine mark is found at Lys-16 and Lys-21. An O-linked (GlcNAc) serine glycan is attached at Ser-113. Lys-121 participates in a covalent cross-link: Glycyl lysine isopeptide (Lys-Gly) (interchain with G-Cter in ubiquitin).

This sequence belongs to the histone H2B family. As to quaternary structure, the nucleosome is a histone octamer containing two molecules each of H2A, H2B, H3 and H4 assembled in one H3-H4 heterotetramer and two H2A-H2B heterodimers. The octamer wraps approximately 147 bp of DNA. Monoubiquitination of Lys-121 by the BRE1 gives a specific tag for epigenetic transcriptional activation and is also prerequisite for histone H3 'Lys-4' and 'Lys-79' methylation. In terms of processing, phosphorylated on Ser-15 during apoptosis; which facilitates apoptotic chromatin condensation. Post-translationally, glcNAcylation at Ser-113 promotes monoubiquitination of Lys-121. It fluctuates in response to extracellular glucose, and associates with transcribed genes.

It localises to the nucleus. The protein resides in the chromosome. Core component of nucleosome. Nucleosomes wrap and compact DNA into chromatin, limiting DNA accessibility to the cellular machineries which require DNA as a template. Histones thereby play a central role in transcription regulation, DNA repair, DNA replication and chromosomal stability. DNA accessibility is regulated via a complex set of post-translational modifications of histones, also called histone code, and nucleosome remodeling. The chain is Histone H2B 8 (H2B-VIII) from Gallus gallus (Chicken).